Reading from the N-terminus, the 267-residue chain is 2-dehydro-3-deoxyphosphooctonate aldolase (267 aa).

Belongs to the KdsA family.

The protein resides in the cytoplasm. It catalyses the reaction D-arabinose 5-phosphate + phosphoenolpyruvate + H2O = 3-deoxy-alpha-D-manno-2-octulosonate-8-phosphate + phosphate. The protein operates within carbohydrate biosynthesis; 3-deoxy-D-manno-octulosonate biosynthesis; 3-deoxy-D-manno-octulosonate from D-ribulose 5-phosphate: step 2/3. It functions in the pathway bacterial outer membrane biogenesis; lipopolysaccharide biosynthesis. The chain is 2-dehydro-3-deoxyphosphooctonate aldolase from Campylobacter jejuni subsp. doylei (strain ATCC BAA-1458 / RM4099 / 269.97).